A 67-amino-acid polypeptide reads, in one-letter code: Conotoxin TsMMSK-B022 (67 aa).

A signal peptide spans 1 to 22 (MMSKLGVLLTICLLLFPLTAVS). Positions 23 to 50 (LDGDQPADLPELRAQDFAPERSPWFDPV) are excised as a propeptide. Cystine bridges form between Cys-53/Cys-65, Cys-54/Cys-61, and Cys-58/Cys-64. Position 63 is a 4-hydroxyproline (Pro-63).

It belongs to the conotoxin M superfamily. In terms of tissue distribution, expressed by the venom duct.

Its subcellular location is the secreted. The polypeptide is Conotoxin TsMMSK-B022 (Conus tessulatus (Tessellate cone)).